The chain runs to 1351 residues: DNA-directed RNA polymerase subunit beta' (1351 aa).

Positions 70, 72, 85, and 88 each coordinate Zn(2+). Positions 460, 462, and 464 each coordinate Mg(2+). Positions 801, 875, 882, and 885 each coordinate Zn(2+).

This sequence belongs to the RNA polymerase beta' chain family. In terms of assembly, the RNAP catalytic core consists of 2 alpha, 1 beta, 1 beta' and 1 omega subunit. When a sigma factor is associated with the core the holoenzyme is formed, which can initiate transcription. Mg(2+) is required as a cofactor. Requires Zn(2+) as cofactor.

It catalyses the reaction RNA(n) + a ribonucleoside 5'-triphosphate = RNA(n+1) + diphosphate. DNA-dependent RNA polymerase catalyzes the transcription of DNA into RNA using the four ribonucleoside triphosphates as substrates. The chain is DNA-directed RNA polymerase subunit beta' from Syntrophobacter fumaroxidans (strain DSM 10017 / MPOB).